Consider the following 129-residue polypeptide: Small ribosomal subunit protein uS11 (129 aa).

It belongs to the universal ribosomal protein uS11 family. In terms of assembly, part of the 30S ribosomal subunit. Interacts with proteins S7 and S18. Binds to IF-3.

In terms of biological role, located on the platform of the 30S subunit, it bridges several disparate RNA helices of the 16S rRNA. Forms part of the Shine-Dalgarno cleft in the 70S ribosome. The polypeptide is Small ribosomal subunit protein uS11 (Geobacillus thermodenitrificans (strain NG80-2)).